Here is a 483-residue protein sequence, read N- to C-terminus: MGSRLHLRDIKHGPPLPYHDDIRAFTKEYAESLDAQDPLRKFRDEFIIPSKKDLKRTVLAADENTDDSTDPRCIYLCGNSLGLQPRSTRKYIDRYLRTWAIKGVTGHFTPHDDQLLPPFVDVDVAGAKLMAPVVGALESEVAVMDTLTTNLHLLMASFYRPTQERYKIIIEGKAFPSDHYAVESQIRHHNREPSEAMVLIEPEDPKHPILTTDQILRVIDENASSAALILLSAIQFYTGQYFDIKTITAHAQSKGIIVGWDCAHAAGNVDLQLHDWNVDFAAWCNYKYLNSGPGGMAGLFVHERHGHVESKNGAQNEGFRPRLSGWWGGDKETRFLMDNNFRPQVGAAGFQLSNPSVLDMNAVVASLEIFSRASMEKIRQKSLHLTGYLEHLLVTYPLDAPPEEKPFTIITPSNPAERGAQLSLRLGPGLLEKVLEVLEEQGVIIDERKPDVIRVAPAPLYNTYAELSSSGIHIAYSSYNQYS.

Residues Leu-147, Thr-148, 175–178 (FPSD), Ser-232, Asp-261, His-264, and Tyr-286 contribute to the pyridoxal 5'-phosphate site. Lys-287 is modified (N6-(pyridoxal phosphate)lysine). 2 residues coordinate pyridoxal 5'-phosphate: Trp-326 and Asn-354.

Belongs to the kynureninase family. As to quaternary structure, homodimer. Requires pyridoxal 5'-phosphate as cofactor.

It localises to the cytoplasm. It catalyses the reaction L-kynurenine + H2O = anthranilate + L-alanine + H(+). The enzyme catalyses 3-hydroxy-L-kynurenine + H2O = 3-hydroxyanthranilate + L-alanine + H(+). It functions in the pathway amino-acid degradation; L-kynurenine degradation; L-alanine and anthranilate from L-kynurenine: step 1/1. It participates in cofactor biosynthesis; NAD(+) biosynthesis; quinolinate from L-kynurenine: step 2/3. Functionally, catalyzes the cleavage of L-kynurenine (L-Kyn) and L-3-hydroxykynurenine (L-3OHKyn) into anthranilic acid (AA) and 3-hydroxyanthranilic acid (3-OHAA), respectively. The protein is Kynureninase 1 (bna5-1) of Aspergillus terreus (strain NIH 2624 / FGSC A1156).